Here is a 536-residue protein sequence, read N- to C-terminus: Light-independent protochlorophyllide reductase subunit B (536 aa).

Position 36 (D36) interacts with [4Fe-4S] cluster. Residue D274 is the Proton donor of the active site. Substrate is bound at residue 409–410; that stretch reads GL. Residues 426–448 are disordered; sequence DEAGPSHHGGKAVPASAPRADEA.

It belongs to the ChlB/BchB/BchZ family. In terms of assembly, protochlorophyllide reductase is composed of three subunits; BchL, BchN and BchB. Forms a heterotetramer of two BchB and two BchN subunits. [4Fe-4S] cluster serves as cofactor.

It carries out the reaction chlorophyllide a + oxidized 2[4Fe-4S]-[ferredoxin] + 2 ADP + 2 phosphate = protochlorophyllide a + reduced 2[4Fe-4S]-[ferredoxin] + 2 ATP + 2 H2O. It participates in porphyrin-containing compound metabolism; bacteriochlorophyll biosynthesis (light-independent). Component of the dark-operative protochlorophyllide reductase (DPOR) that uses Mg-ATP and reduced ferredoxin to reduce ring D of protochlorophyllide (Pchlide) to form chlorophyllide a (Chlide). This reaction is light-independent. The NB-protein (BchN-BchB) is the catalytic component of the complex. In Cereibacter sphaeroides (strain KD131 / KCTC 12085) (Rhodobacter sphaeroides), this protein is Light-independent protochlorophyllide reductase subunit B.